Reading from the N-terminus, the 327-residue chain is Phenylalanine--tRNA ligase alpha subunit (327 aa).

E252 is a binding site for Mg(2+).

Belongs to the class-II aminoacyl-tRNA synthetase family. Phe-tRNA synthetase alpha subunit type 1 subfamily. As to quaternary structure, tetramer of two alpha and two beta subunits. The cofactor is Mg(2+).

Its subcellular location is the cytoplasm. The enzyme catalyses tRNA(Phe) + L-phenylalanine + ATP = L-phenylalanyl-tRNA(Phe) + AMP + diphosphate + H(+). The polypeptide is Phenylalanine--tRNA ligase alpha subunit (Proteus mirabilis (strain HI4320)).